Here is a 167-residue protein sequence, read N- to C-terminus: Protein YfbM (167 aa).

Monomer.

In Escherichia coli (strain K12), this protein is Protein YfbM (yfbM).